We begin with the raw amino-acid sequence, 384 residues long: Probable splicing factor YJU2B (384 aa).

Residues 1-28 are disordered; sequence MGERKGTNKYYPPDFDPAKHGSLNGYRN. Residues 183-212 adopt a coiled-coil conformation; that stretch reads NSLLRSKFREEKKQIKEEEERDQALLTKAS. Residues 275 to 331 are disordered; the sequence is GIRTKTPSVPGISPVSLGVVRRTSKEENKAEDKSVESPDGSRSRKAEGMCRKEETGC. The span at 297–331 shows a compositional bias: basic and acidic residues; it reads TSKEENKAEDKSVESPDGSRSRKAEGMCRKEETGC.

This sequence belongs to the CWC16 family.

It is found in the nucleus. Its function is as follows. May be involved in mRNA splicing. In Xenopus laevis (African clawed frog), this protein is Probable splicing factor YJU2B (yju2b).